Reading from the N-terminus, the 222-residue chain is Capsular polysaccharide type 8 biosynthesis protein cap8A (222 aa).

2 helical membrane passes run 20–40 and 172–192; these read ILII…FFVL and VVNL…YIFF.

The protein belongs to the CpsC/CapA family.

The protein localises to the cell membrane. Required for the biosynthesis of type 8 capsular polysaccharide (Cap8/CP8). Might act as the chain-length regulator. In Staphylococcus aureus, this protein is Capsular polysaccharide type 8 biosynthesis protein cap8A (cap8A).